A 192-amino-acid chain; its full sequence is FAD-linked sulfhydryl oxidase erv2 (192 aa).

Residues 1 to 8 (MILNRRIQ) lie on the Cytoplasmic side of the membrane. The helical; Signal-anchor transmembrane segment at 9 to 29 (VILPTLLILSFIIWIFHSVMV) threads the bilayer. At 30-192 (DKDWRLFMPE…VINEDHDYSG (163 aa)) the chain is on the lumenal side. Residues 61-162 (HDNNTNNLMV…TSCDGFNERY (102 aa)) enclose the ERV/ALR sulfhydryl oxidase domain. Positions 74, 138, 141, 145, and 162 each coordinate FAD. Cys138 and Cys155 are disulfide-bonded.

Requires FAD as cofactor.

The protein localises to the endoplasmic reticulum membrane. It is found in the cytoplasm. The protein resides in the nucleus. The enzyme catalyses 2 R'C(R)SH + O2 = R'C(R)S-S(R)CR' + H2O2. Its function is as follows. FAD-dependent sulfhydryl oxidase that catalyzes disulfide bond formation in the endoplasmic reticulum lumen. The protein is FAD-linked sulfhydryl oxidase erv2 (erv2) of Schizosaccharomyces pombe (strain 972 / ATCC 24843) (Fission yeast).